Reading from the N-terminus, the 425-residue chain is Histidine--tRNA ligase (425 aa).

This sequence belongs to the class-II aminoacyl-tRNA synthetase family. In terms of assembly, homodimer.

Its subcellular location is the cytoplasm. It catalyses the reaction tRNA(His) + L-histidine + ATP = L-histidyl-tRNA(His) + AMP + diphosphate + H(+). The protein is Histidine--tRNA ligase of Shewanella sp. (strain MR-7).